Here is a 206-residue protein sequence, read N- to C-terminus: Small ribosomal subunit protein uS4 (206 aa).

Residues 96–156 (GRLDNVVYRM…EKAKKQSRVK (61 aa)) enclose the S4 RNA-binding domain.

This sequence belongs to the universal ribosomal protein uS4 family. As to quaternary structure, part of the 30S ribosomal subunit. Contacts protein S5. The interaction surface between S4 and S5 is involved in control of translational fidelity.

Its function is as follows. One of the primary rRNA binding proteins, it binds directly to 16S rRNA where it nucleates assembly of the body of the 30S subunit. Functionally, with S5 and S12 plays an important role in translational accuracy. The sequence is that of Small ribosomal subunit protein uS4 from Pectobacterium atrosepticum (strain SCRI 1043 / ATCC BAA-672) (Erwinia carotovora subsp. atroseptica).